We begin with the raw amino-acid sequence, 345 residues long: Serine proteinase inhibitor 2 (345 aa).

This sequence belongs to the serpin family. Poxviruses subfamily.

The protein localises to the host cytoplasm. In terms of biological role, viral serpin that inhibits both cysteine and serine proteinases involved in the regulation of host inflammatory and apoptosis processes. Major anti-apoptotic protein which inhibits both intrinsic and extrinsic pathways and strongly cleaves host CASP1 and CASP8 but is a rather poor inhibitor of host CASP3. Prevents the proteolytic activity of host interleukin-1-beta converting enzyme (ICE) and ICE-like enzymes. Can also block apoptosis through host tumor necrosis factor (TNF) receptor. The inhibition of host ICE is an example of a 'cross-class' interaction, in which a serpin inhibits a non-serine proteinase. Also inhibits granzyme B. The chain is Serine proteinase inhibitor 2 (OPG199) from Rabbitpox virus (strain Utrecht) (RPV).